The following is a 369-amino-acid chain: tRNA/tmRNA (uracil-C(5))-methyltransferase (369 aa).

S-adenosyl-L-methionine is bound by residues Gln190, Tyr218, Asn223, Glu239, and Asp301. Cys326 acts as the Nucleophile in catalysis. The Proton acceptor role is filled by Glu360.

Belongs to the class I-like SAM-binding methyltransferase superfamily. RNA M5U methyltransferase family. TrmA subfamily.

The catalysed reaction is uridine(54) in tRNA + S-adenosyl-L-methionine = 5-methyluridine(54) in tRNA + S-adenosyl-L-homocysteine + H(+). It catalyses the reaction uridine(341) in tmRNA + S-adenosyl-L-methionine = 5-methyluridine(341) in tmRNA + S-adenosyl-L-homocysteine + H(+). Functionally, dual-specificity methyltransferase that catalyzes the formation of 5-methyluridine at position 54 (m5U54) in all tRNAs, and that of position 341 (m5U341) in tmRNA (transfer-mRNA). The protein is tRNA/tmRNA (uracil-C(5))-methyltransferase of Vibrio cholerae serotype O1 (strain ATCC 39541 / Classical Ogawa 395 / O395).